We begin with the raw amino-acid sequence, 152 residues long: MSTINTDTNETMPHISVNAQYIKDLSLENPSAPSSLAALDQRPQIDLSLDINITNLSEENFYEVELNIEAIARNEKYKLFQIELKYAGVFNLINIDSEQHPVLLSVHCPAMIFPFARKIIASCTQDAGFQPLMIDPIDFGALYHKKMSEHQN.

Belongs to the SecB family. As to quaternary structure, homotetramer, a dimer of dimers. One homotetramer interacts with 1 SecA dimer.

The protein localises to the cytoplasm. One of the proteins required for the normal export of preproteins out of the cell cytoplasm. It is a molecular chaperone that binds to a subset of precursor proteins, maintaining them in a translocation-competent state. It also specifically binds to its receptor SecA. This chain is Protein-export protein SecB, found in Rickettsia conorii (strain ATCC VR-613 / Malish 7).